Reading from the N-terminus, the 183-residue chain is Peptidyl-prolyl cis-trans isomerase H (183 aa).

One can recognise a PPIase cyclophilin-type domain in the interval 19-182 (FFDVALGGEP…QDVVIIQCGE (164 aa)).

It belongs to the cyclophilin-type PPIase family. PPIase H subfamily.

It localises to the nucleus. The enzyme catalyses [protein]-peptidylproline (omega=180) = [protein]-peptidylproline (omega=0). Functionally, PPIases accelerate the folding of proteins. It catalyzes the cis-trans isomerization of proline imidic peptide bonds in oligopeptides. The sequence is that of Peptidyl-prolyl cis-trans isomerase H (cyp3) from Emericella nidulans (strain FGSC A4 / ATCC 38163 / CBS 112.46 / NRRL 194 / M139) (Aspergillus nidulans).